The chain runs to 199 residues: NAD(P)H dehydrogenase (quinone) 1 (199 aa).

Positions 4-190 (VLVLYYSAYG…EAARFQGAHV (187 aa)) constitute a Flavodoxin-like domain. FMN-binding positions include 10 to 15 (SAYGHI) and 78 to 80 (TRY). Tyrosine 12 contacts NAD(+). Tryptophan 98 lines the substrate pocket. FMN contacts are provided by residues 113-119 (SSATQHG) and histidine 134.

The protein belongs to the WrbA family. FMN is required as a cofactor.

It catalyses the reaction a quinone + NADH + H(+) = a quinol + NAD(+). It carries out the reaction a quinone + NADPH + H(+) = a quinol + NADP(+). The sequence is that of NAD(P)H dehydrogenase (quinone) 1 from Rhizobium meliloti (strain 1021) (Ensifer meliloti).